A 788-amino-acid polypeptide reads, in one-letter code: Xylulose-5-phosphate phosphoketolase (788 aa).

The protein belongs to the XFP family. Homohexamer. The cofactor is thiamine diphosphate.

The enzyme catalyses D-xylulose 5-phosphate + phosphate = acetyl phosphate + D-glyceraldehyde 3-phosphate + H2O. The chain is Xylulose-5-phosphate phosphoketolase (xpkA) from Lactiplantibacillus pentosus (Lactobacillus pentosus).